The sequence spans 521 residues: Acetylcholine receptor subunit delta (521 aa).

The signal sequence occupies residues 1 to 21; sequence MAWIWISLLLPILIYFPGCFS. Residues 22 to 247 are Extracellular-facing; the sequence is ESEEERLLNH…ITFYLIIERK (226 aa). N-linked (GlcNAc...) asparagine glycans are attached at residues asparagine 53 and asparagine 164. Cysteines 151 and 165 form a disulfide. 3 helical membrane-spanning segments follow: residues 248–272, 280–297, and 314–335; these read PLFY…VFYL, MTLA…LLLI, and YLMF…VLNL. The Cytoplasmic segment spans residues 336 to 475; it reads HFRTPSTHAI…WYRIARTVDR (140 aa). Tyrosine 394 carries the phosphotyrosine; by Tyr-kinases modification. A helical transmembrane segment spans residues 476–494; that stretch reads LCLFLVTPVMIIGTLWIFL.

This sequence belongs to the ligand-gated ion channel (TC 1.A.9) family. Acetylcholine receptor (TC 1.A.9.1) subfamily. Pentamer of two alpha chains, and one each of the beta, delta, and gamma (in immature muscle) or epsilon (in mature muscle) chains.

The protein localises to the postsynaptic cell membrane. It localises to the cell membrane. It catalyses the reaction K(+)(in) = K(+)(out). The enzyme catalyses Na(+)(in) = Na(+)(out). In terms of biological role, after binding acetylcholine, the AChR responds by an extensive change in conformation that affects all subunits and leads to opening of an ion-conducting channel across the plasma membrane. The protein is Acetylcholine receptor subunit delta (chrnd) of Xenopus laevis (African clawed frog).